The primary structure comprises 197 residues: MSEFQKVVVIDAKGHLLGRLASVVAKQLLGGQKVVVVRCEELNISGHFFRNKLKYLAYLRKACRYNPSRGAFHFRAPSRIFQKAVRGMLPHKTARGQAALEHLQAVEGIPPPFDKQKRVVVPAALRVLRLKPGRKYCTVGRLSSEVGWKYSDIVSKLEERRKVKSAAFYQAKLAKQKKIASAKAASSVNGKLAEFGY.

Serine 151 bears the Phosphoserine mark.

It belongs to the universal ribosomal protein uL13 family. In terms of assembly, component of the large ribosomal subunit (LSU). Mature yeast ribosomes consist of a small (40S) and a large (60S) subunit. The 40S small subunit contains 1 molecule of ribosomal RNA (18S rRNA) and at least 33 different proteins. The large 60S subunit contains 3 rRNA molecules (25S, 5.8S and 5S rRNA) and at least 46 different proteins.

The protein resides in the cytoplasm. It is found in the nucleus. Its subcellular location is the nucleolus. Functionally, component of the ribosome, a large ribonucleoprotein complex responsible for the synthesis of proteins in the cell. The small ribosomal subunit (SSU) binds messenger RNAs (mRNAs) and translates the encoded message by selecting cognate aminoacyl-transfer RNA (tRNA) molecules. The large subunit (LSU) contains the ribosomal catalytic site termed the peptidyl transferase center (PTC), which catalyzes the formation of peptide bonds, thereby polymerizing the amino acids delivered by tRNAs into a polypeptide chain. The nascent polypeptides leave the ribosome through a tunnel in the LSU and interact with protein factors that function in enzymatic processing, targeting, and the membrane insertion of nascent chains at the exit of the ribosomal tunnel. This chain is Large ribosomal subunit protein uL13A (rpl1602), found in Schizosaccharomyces pombe (strain 972 / ATCC 24843) (Fission yeast).